Here is a 482-residue protein sequence, read N- to C-terminus: MHYSQTSSFGGNHTEIAKIIHKFLQPRVKQYPLWNPPSREYMSRAMACQICEVTINEMDTLLICDACEKAYHLKCLQGNNMKGVPKSEWHCSRCVQAFNGKPFPPTYGRATRAVATTTAKMPFRAAGVLSSSAKKIGPMDIKANQQKPIVSTFSRLQNTGLVSGAATTSQFESASVNAKTTASAAKTTNIGSQGSKENVACGANSPAPVSLTETPNRTGIASTISVINNGLISKPLTPVGTMSSTSPLPVVNQLPVNATSNASPSTPITASLVAQAPTVTQNGDGSSTASGTADHSILNADITTQVHTLTVTSSSNSQQAVSHSEVAKATEDAAPLENVSECEKPSESTSHPDSLNDKTISENVQESSKDAKVDSEACQNHPTASPATVVPDQDSTITAAPSVTQEDSAFNTEKTPPQPLSVSSNYDSQTEKETPNVQDSVHNVPGDSEKGKGLNGLDDRHQEQPSEPEFYKSDSVKEENAA.

The PHD-type zinc finger occupies 45-97 (AMACQICEVTINEMDTLLICDACEKAYHLKCLQGNNMKGVPKSEWHCSRCVQA). 2 disordered regions span residues 188 to 210 (TNIG…APVS) and 314 to 482 (SSNS…ENAA). Positions 314–324 (SSNSQQAVSHS) are enriched in low complexity. Polar residues-rich tracts occupy residues 377 to 386 (ACQNHPTASP) and 393 to 428 (QDST…NYDS). Residues 447–482 (DSEKGKGLNGLDDRHQEQPSEPEFYKSDSVKEENAA) are compositionally biased toward basic and acidic residues.

This Arabidopsis thaliana (Mouse-ear cress) protein is PHD finger protein At3g20280.